Here is a 140-residue protein sequence, read N- to C-terminus: MATERTLSIIKPDATRRNLTGRINAKFEEAGLRIVAQKRIRLTKDQAEAFYGVHKERPFFAGLVSFMTSGPVVVQVLEGDDAVARNRAIMGATDPRKAEAGTIRAEFAEDIEANSVHGSDAADTAAQEIAFFFAGVEIVG.

Lys-11, Phe-59, Arg-87, Thr-93, Arg-104, and Asn-114 together coordinate ATP. His-117 (pros-phosphohistidine intermediate) is an active-site residue.

It belongs to the NDK family. In terms of assembly, homotetramer. It depends on Mg(2+) as a cofactor.

Its subcellular location is the cytoplasm. It carries out the reaction a 2'-deoxyribonucleoside 5'-diphosphate + ATP = a 2'-deoxyribonucleoside 5'-triphosphate + ADP. It catalyses the reaction a ribonucleoside 5'-diphosphate + ATP = a ribonucleoside 5'-triphosphate + ADP. Its function is as follows. Major role in the synthesis of nucleoside triphosphates other than ATP. The ATP gamma phosphate is transferred to the NDP beta phosphate via a ping-pong mechanism, using a phosphorylated active-site intermediate. The chain is Nucleoside diphosphate kinase from Acidiphilium cryptum (strain JF-5).